The following is a 607-amino-acid chain: MEAPAAGLFLLLLLGTWAPAPGSASSEAPPLINEDVKRTVDLSSHLAKVTAEVVLAHLGGGSTSRATSFLLALEPELEARLAHLGVQVKGEDEEENNLEVRETKIKGKSGRFFTVKLPVALDPGAKISVIVETVYTHVLHPYPTQITQSEKQFVVFEGNHYFYSPYPTKTQTMRVKLASRNVESYTKLGNPTRSEDLLDYGPFRDVPAYSQDTFKVHYENNSPFLTITSMTRVIEVSHWGNIAVEENVDLKHTGAVLKGPFSRYDYQRQPDSGISSIRSFKTILPAAAQDVYYRDEIGNVSTSHLLILDDSVEMEIRPRFPLFGGWKTHYIVGYNLPSYEYLYNLGDQYALKMRFVDHVFDEQVIDSLTVKIILPEGAKNIEIDSPYEISRAPDELHYTYLDTFGRPVIVAYKKNLVEQHIQDIVVHYTFNKVLMLQEPLLVVAAFYILFFTVIIYVRLDFSITKDPAAEARMKVACITEQVLTLVNKRIGLYRHFDETVNRYKQSRDISTLNSGKKSLETEHKALTSEIALLQSRLKTEGSDLCDRVSEMQKLDAQVKELVLKSAVEAERLVAGKLKKDTYIENEKLISGKRQELVTKIDHILDAL.

The first 23 residues, 1–23, serve as a signal peptide directing secretion; it reads MEAPAAGLFLLLLLGTWAPAPGS. The Lumenal segment spans residues 24–438; sequence ASSEAPPLIN…TFNKVLMLQE (415 aa). Residue lysine 187 is modified to N6-acetyllysine. The N-linked (GlcNAc...) asparagine glycan is linked to asparagine 299. A helical transmembrane segment spans residues 439 to 457; sequence PLLVVAAFYILFFTVIIYV. The Cytoplasmic portion of the chain corresponds to 458 to 607; sequence RLDFSITKDP…TKIDHILDAL (150 aa). The residue at position 538 (lysine 538) is an N6-acetyllysine; alternate. Residue lysine 538 forms a Glycyl lysine isopeptide (Lys-Gly) (interchain with G-Cter in SUMO2); alternate linkage.

Belongs to the OST1 family. In terms of assembly, component of the oligosaccharyltransferase (OST) complex. OST exists in two different complex forms which contain common core subunits RPN1, RPN2, OST48, OST4, DAD1 and TMEM258, either STT3A or STT3B as catalytic subunits, and form-specific accessory subunits. STT3A complex assembly occurs through the formation of 3 subcomplexes. Subcomplex 1 contains RPN1 and TMEM258, subcomplex 2 contains the STT3A-specific subunits STT3A, DC2/OSTC, and KCP2 as well as the core subunit OST4, and subcomplex 3 contains RPN2, DAD1, and OST48. The STT3A complex can form stable complexes with the Sec61 complex or with both the Sec61 and TRAP complexes. Interacts with TMEM35A/NACHO. In terms of processing, ubiquitinated by the ECS(ASB11) complex. Ubiquitinated by RNF128, leading to degradation in a proteasome/lysosome-dependent manner. Ufmylated by UFL1 in response to endoplasmic reticulum stress, promoting reticulophagy of endoplasmic reticulum sheets. In terms of tissue distribution, expressed in all tissues tested.

The protein localises to the endoplasmic reticulum membrane. The protein resides in the melanosome. It functions in the pathway protein modification; protein glycosylation. Functionally, subunit of the oligosaccharyl transferase (OST) complex that catalyzes the initial transfer of a defined glycan (Glc(3)Man(9)GlcNAc(2) in eukaryotes) from the lipid carrier dolichol-pyrophosphate to an asparagine residue within an Asn-X-Ser/Thr consensus motif in nascent polypeptide chains, the first step in protein N-glycosylation. N-glycosylation occurs cotranslationally and the complex associates with the Sec61 complex at the channel-forming translocon complex that mediates protein translocation across the endoplasmic reticulum (ER). All subunits are required for a maximal enzyme activity. This is Dolichyl-diphosphooligosaccharide--protein glycosyltransferase subunit 1 from Homo sapiens (Human).